Reading from the N-terminus, the 324-residue chain is PGR5-like protein 1A, chloroplastic (324 aa).

A chloroplast-targeting transit peptide spans 1–60 (MGSKMLFSLTSPRLFSAVSRKPSSSFSPSPPSPSSRTQWTQLSPGKSISLRRRVFLLPAK). A disordered region spans residues 16-42 (SAVSRKPSSSFSPSPPSPSSRTQWTQL). Over 61–198 (ATTEQSGPVG…KVYSDLAVDY (138 aa)) the chain is Stromal. A disulfide bond links cysteine 82 and cysteine 183. The helical transmembrane segment at 199–219 (FKMLLLNVPATVVALGLFFFL) threads the bilayer. The Lumenal, thylakoid portion of the chain corresponds to 220–236 (DDITGFEITYIMELPEP). Residues 237–257 (YSFIFTWFAAVPVIVYLALSI) form a helical membrane-spanning segment. The Stromal segment spans residues 258 to 324 (TKLIIKDFLI…LITLPEGSQA (67 aa)).

The protein belongs to the PGR5 family. In terms of assembly, homodimer and heterodimer with PGR5. Interacts with PGR5, FD2, petC, psaD1, LFNR1 and LFNR2. Also interacts with a Fe-containing cofactor (FCC). Disulfide bonds; Cys-300 and Cys-303 are probably involved in the formation of disulfide bridges with 'Cys-11' and 'Cys-105' of PGR5 while Cys-272 and Cys-275 are probably involved in the binding of a Fe-containing cofactor (FCC).

It is found in the plastid. It localises to the chloroplast thylakoid membrane. Its activity is regulated as follows. Inhibited by antimycin A. In terms of biological role, ferredoxin-plastoquinone reductase involved in cyclic electron flow (CEF) around photosystem I. The homodimer is probably not involved in CEF. This Arabidopsis thaliana (Mouse-ear cress) protein is PGR5-like protein 1A, chloroplastic (PGRL1A).